Here is a 450-residue protein sequence, read N- to C-terminus: CBL-interacting protein kinase 23 (450 aa).

The 256-residue stretch at 13–268 (YELGRTLGEG…IAELINNEWF (256 aa)) folds into the Protein kinase domain. ATP is bound by residues 19 to 27 (LGEGTFAKV) and Lys42. The active-site Proton acceptor is Asp136. An activation loop region spans residues 154 to 183 (DFGLSALSQQVREDGLLHTTCGTPNYVAPE). The 26-residue stretch at 306–331 (EERPSVMNAFELISTSQGLNLGTLFE) folds into the NAF domain. The segment at 339-368 (KRETRFASRLPANEILSKIEAAAGPMGFNV) is PPI.

Belongs to the protein kinase superfamily. CAMK Ser/Thr protein kinase family. SNF1 subfamily. Mn(2+) serves as cofactor.

It catalyses the reaction L-seryl-[protein] + ATP = O-phospho-L-seryl-[protein] + ADP + H(+). It carries out the reaction L-threonyl-[protein] + ATP = O-phospho-L-threonyl-[protein] + ADP + H(+). Functionally, CIPK serine-threonine protein kinases interact with CBL proteins. Binding of a CBL protein to the regulatory NAF domain of CIPK protein lead to the activation of the kinase in a calcium-dependent manner. This chain is CBL-interacting protein kinase 23 (CIPK23), found in Oryza sativa subsp. japonica (Rice).